A 374-amino-acid polypeptide reads, in one-letter code: Queuine tRNA-ribosyltransferase (374 aa).

Asp-89 acts as the Proton acceptor in catalysis. Residues 89 to 93 (DSGGF), Asp-143, Gln-187, and Gly-214 contribute to the substrate site. Residues 245 to 251 (GVGKPED) are RNA binding. The active-site Nucleophile is Asp-264. The segment at 269–273 (TRNAR) is RNA binding; important for wobble base 34 recognition. Residues Cys-302, Cys-304, Cys-307, and His-333 each contribute to the Zn(2+) site.

The protein belongs to the queuine tRNA-ribosyltransferase family. As to quaternary structure, homodimer. Within each dimer, one monomer is responsible for RNA recognition and catalysis, while the other monomer binds to the replacement base PreQ1. Zn(2+) is required as a cofactor.

It catalyses the reaction 7-aminomethyl-7-carbaguanine + guanosine(34) in tRNA = 7-aminomethyl-7-carbaguanosine(34) in tRNA + guanine. It functions in the pathway tRNA modification; tRNA-queuosine biosynthesis. Catalyzes the base-exchange of a guanine (G) residue with the queuine precursor 7-aminomethyl-7-deazaguanine (PreQ1) at position 34 (anticodon wobble position) in tRNAs with GU(N) anticodons (tRNA-Asp, -Asn, -His and -Tyr). Catalysis occurs through a double-displacement mechanism. The nucleophile active site attacks the C1' of nucleotide 34 to detach the guanine base from the RNA, forming a covalent enzyme-RNA intermediate. The proton acceptor active site deprotonates the incoming PreQ1, allowing a nucleophilic attack on the C1' of the ribose to form the product. After dissociation, two additional enzymatic reactions on the tRNA convert PreQ1 to queuine (Q), resulting in the hypermodified nucleoside queuosine (7-(((4,5-cis-dihydroxy-2-cyclopenten-1-yl)amino)methyl)-7-deazaguanosine). This is Queuine tRNA-ribosyltransferase from Shewanella baltica (strain OS223).